A 608-amino-acid polypeptide reads, in one-letter code: Elongation factor 4 (608 aa).

A tr-type G domain is found at 11 to 193 (KKIRNFSIIA…QIVEKVPEPS (183 aa)). Residues 23-28 (DHGKST) and 140-143 (NKID) each bind GTP.

The protein belongs to the TRAFAC class translation factor GTPase superfamily. Classic translation factor GTPase family. LepA subfamily.

It is found in the cell membrane. The catalysed reaction is GTP + H2O = GDP + phosphate + H(+). Required for accurate and efficient protein synthesis under certain stress conditions. May act as a fidelity factor of the translation reaction, by catalyzing a one-codon backward translocation of tRNAs on improperly translocated ribosomes. Back-translocation proceeds from a post-translocation (POST) complex to a pre-translocation (PRE) complex, thus giving elongation factor G a second chance to translocate the tRNAs correctly. Binds to ribosomes in a GTP-dependent manner. This is Elongation factor 4 from Listeria innocua serovar 6a (strain ATCC BAA-680 / CLIP 11262).